The following is a 606-amino-acid chain: Endo-beta-1,4-xylanase Xyn10C (606 aa).

A signal peptide spans 1–19 (MKKIQQLLMLSLISSTLIA). Cysteine 20 carries N-palmitoyl cysteine lipidation. Cysteine 20 carries the S-diacylglycerol cysteine lipid modification. The tract at residues 23 to 64 (GGGGGSTPTTSSSPQSSSPASTPSSASSSSIISSSSLSSSLS) is disordered. Low complexity predominate over residues 29-64 (TPTTSSSPQSSSPASTPSSASSSSIISSSSLSSSLS). Positions 91–242 (GNVVIEVDMA…KSVTITLAQE (152 aa)) constitute a CBM15 domain. A carbohydrate-binding residues include asparagine 106 and glutamine 171. An intrachain disulfide couples cysteine 183 to cysteine 200. Glutamine 217 contacts a carbohydrate. In terms of domain architecture, GH10 spans 245–596 (SANVDHLRDL…KPALRGFADA (352 aa)). Substrate contacts are provided by residues 296-299 (NIMK), histidine 332, and asparagine 384. Glutamate 385 (proton donor) is an active-site residue. The active-site Nucleophile is glutamate 497. Residue tryptophan 552 coordinates substrate.

Belongs to the glycosyl hydrolase 10 (cellulase F) family.

Its subcellular location is the cell outer membrane. The enzyme catalyses Endohydrolysis of (1-&gt;4)-beta-D-xylosidic linkages in xylans.. Its pathway is glycan degradation; xylan degradation. In terms of biological role, endo-acting xylanase which specifically cleaves internal linkages on the xylan backbone, releasing xylooligosaccharides. Is able to hydrolyze oat spelt xylan, the arabinoxylans from wheat and rye, and glucuronoxylan. Also displays very low activity against xylooligosaccharides. During the xylan degradation process, Xyn10C may act on the soluble xylans and long xylooligosaccharides products released by the secreted xylanases Xyn11A, Xyn11B and Xyn10A. The polypeptide is Endo-beta-1,4-xylanase Xyn10C (xyn10C) (Cellvibrio japonicus (Pseudomonas fluorescens subsp. cellulosa)).